A 759-amino-acid polypeptide reads, in one-letter code: uncharacterized protein (759 aa).

The MCM domain occupies valine 352–isoleucine 556. Residue serine 397 to serine 404 participates in ATP binding.

It belongs to the MCM family.

This is an uncharacterized protein from Methanocaldococcus jannaschii (strain ATCC 43067 / DSM 2661 / JAL-1 / JCM 10045 / NBRC 100440) (Methanococcus jannaschii).